The primary structure comprises 354 residues: Probable L-ascorbate-6-phosphate lactonase UlaG (354 aa).

Belongs to the UlaG family. Requires a divalent metal cation as cofactor.

The protein localises to the cytoplasm. It catalyses the reaction L-ascorbate 6-phosphate + H2O = 3-dehydro-L-gulonate 6-phosphate. Its pathway is cofactor degradation; L-ascorbate degradation; D-xylulose 5-phosphate from L-ascorbate: step 1/4. In terms of biological role, probably catalyzes the hydrolysis of L-ascorbate-6-P into 3-keto-L-gulonate-6-P. Is essential for L-ascorbate utilization under anaerobic conditions. The sequence is that of Probable L-ascorbate-6-phosphate lactonase UlaG from Salmonella choleraesuis (strain SC-B67).